Reading from the N-terminus, the 515-residue chain is ATP synthase subunit alpha (515 aa).

171-178 contacts ATP; that stretch reads GDRQTGKT.

The protein belongs to the ATPase alpha/beta chains family. F-type ATPases have 2 components, CF(1) - the catalytic core - and CF(0) - the membrane proton channel. CF(1) has five subunits: alpha(3), beta(3), gamma(1), delta(1), epsilon(1). CF(0) has three main subunits: a(1), b(2) and c(9-12). The alpha and beta chains form an alternating ring which encloses part of the gamma chain. CF(1) is attached to CF(0) by a central stalk formed by the gamma and epsilon chains, while a peripheral stalk is formed by the delta and b chains.

Its subcellular location is the cell inner membrane. The catalysed reaction is ATP + H2O + 4 H(+)(in) = ADP + phosphate + 5 H(+)(out). Its function is as follows. Produces ATP from ADP in the presence of a proton gradient across the membrane. The alpha chain is a regulatory subunit. The protein is ATP synthase subunit alpha of Xanthomonas axonopodis pv. citri (strain 306).